Consider the following 224-residue polypeptide: Imidazoleglycerol-phosphate dehydratase (224 aa).

This sequence belongs to the imidazoleglycerol-phosphate dehydratase family.

It carries out the reaction D-erythro-1-(imidazol-4-yl)glycerol 3-phosphate = 3-(imidazol-4-yl)-2-oxopropyl phosphate + H2O. Its pathway is amino-acid biosynthesis; L-histidine biosynthesis; L-histidine from 5-phospho-alpha-D-ribose 1-diphosphate: step 6/9. In Cyberlindnera jadinii (Torula yeast), this protein is Imidazoleglycerol-phosphate dehydratase (HIS3).